A 270-amino-acid chain; its full sequence is Ribosomal RNA small subunit methyltransferase A (270 aa).

Residues N18, L20, G45, E66, D91, and N112 each contribute to the S-adenosyl-L-methionine site.

Belongs to the class I-like SAM-binding methyltransferase superfamily. rRNA adenine N(6)-methyltransferase family. RsmA subfamily.

The protein localises to the cytoplasm. It carries out the reaction adenosine(1518)/adenosine(1519) in 16S rRNA + 4 S-adenosyl-L-methionine = N(6)-dimethyladenosine(1518)/N(6)-dimethyladenosine(1519) in 16S rRNA + 4 S-adenosyl-L-homocysteine + 4 H(+). Specifically dimethylates two adjacent adenosines (A1518 and A1519) in the loop of a conserved hairpin near the 3'-end of 16S rRNA in the 30S particle. May play a critical role in biogenesis of 30S subunits. In Shewanella piezotolerans (strain WP3 / JCM 13877), this protein is Ribosomal RNA small subunit methyltransferase A.